The sequence spans 257 residues: Melatonin receptor type 1A (257 aa).

Residues 5–22 (LASIVNDGWSLSSLHCQL) lie on the Extracellular side of the membrane. The cysteines at positions 20 and 97 are disulfide-linked. The chain crosses the membrane as a helical span at residues 23–43 (SGFLMGLSVIGSVFNITGIAI). The Cytoplasmic portion of the chain corresponds to 44–64 (NRYCCICHSLRYNKLYSSTNS). Residues 65–85 (LCYVFLIWMLTLVAIVPNLCV) traverse the membrane as a helical segment. The Extracellular portion of the chain corresponds to 86 to 107 (GTLQYDPRIYSCTFTQSVSSAY). A helical transmembrane segment spans residues 108 to 128 (TIAVVVFHFIVPMLVVIFCYL). The Cytoplasmic portion of the chain corresponds to 129-160 (RIWALVLQVRWRVKPDNKPKLKPQDFRNFVTM). The chain crosses the membrane as a helical span at residues 161–181 (FVVFVLFAICWAPLNFIGLVV). Residues 182–194 (ASEPASMAPRIPE) are Extracellular-facing. The helical transmembrane segment at 195–215 (WLFVASYYMGYFNSCLNAIIY) threads the bilayer. Over 216–257 (GLLNQNFRQEYRKIIVSLCTTKMFFVDSSNHVAHRIKRKPSP) the chain is Cytoplasmic.

This sequence belongs to the G-protein coupled receptor 1 family.

Its subcellular location is the cell membrane. Functionally, high affinity receptor for melatonin. Likely to mediate the reproductive and circadian actions of melatonin. The activity of this receptor is mediated by pertussis toxin sensitive G proteins that inhibit adenylate cyclase activity. Possibly involved in sleep induction, by melatonin activation of the potassium channel KCNMA1/BK and the dissociation of G-beta and G-gamma subunits, thereby decreasing synaptic transmission. The sequence is that of Melatonin receptor type 1A (MTNR1A) from Bos taurus (Bovine).